The primary structure comprises 30 residues: Cycloviolacin-O24 (30 aa).

A cross-link (cyclopeptide (Gly-Asn)) is located at residues 1–30; sequence GLPTCGETCFGGTCNTPGCTCDPWPVCTHN. 3 disulfide bridges follow: C5–C19, C9–C21, and C14–C27.

This is a cyclic peptide. In terms of tissue distribution, expressed in leaves but not in petals, petioles, roots and runners (at protein level).

In terms of biological role, probably participates in a plant defense mechanism. Has hemolytic activity. The polypeptide is Cycloviolacin-O24 (Viola odorata (Sweet violet)).